Consider the following 66-residue polypeptide: MRGKVKWFDSKKGYGFITKDEGGDVFVHWSAIEMEGFKTLKEGQVVEFEIQEGKKGPQAAHVKVVE.

The 60-residue stretch at 3–62 (GKVKWFDSKKGYGFITKDEGGDVFVHWSAIEMEGFKTLKEGQVVEFEIQEGKKGPQAAHV) folds into the CSD domain.

In terms of assembly, monomer.

The protein resides in the cytoplasm. This chain is Cold shock-like protein (csp), found in Thermotoga maritima (strain ATCC 43589 / DSM 3109 / JCM 10099 / NBRC 100826 / MSB8).